A 262-amino-acid chain; its full sequence is Acyl-[acyl-carrier-protein]--UDP-N-acetylglucosamine O-acyltransferase (262 aa).

It belongs to the transferase hexapeptide repeat family. LpxA subfamily. Homotrimer.

The protein localises to the cytoplasm. The enzyme catalyses a (3R)-hydroxyacyl-[ACP] + UDP-N-acetyl-alpha-D-glucosamine = a UDP-3-O-[(3R)-3-hydroxyacyl]-N-acetyl-alpha-D-glucosamine + holo-[ACP]. It participates in glycolipid biosynthesis; lipid IV(A) biosynthesis; lipid IV(A) from (3R)-3-hydroxytetradecanoyl-[acyl-carrier-protein] and UDP-N-acetyl-alpha-D-glucosamine: step 1/6. Functionally, involved in the biosynthesis of lipid A, a phosphorylated glycolipid that anchors the lipopolysaccharide to the outer membrane of the cell. This is Acyl-[acyl-carrier-protein]--UDP-N-acetylglucosamine O-acyltransferase from Yersinia enterocolitica.